We begin with the raw amino-acid sequence, 218 residues long: Small ribosomal subunit protein uS3c (218 aa).

The KH type-2 domain occupies 47 to 118; the sequence is VQKHMRISSG…RLNITITRIA (72 aa).

The protein belongs to the universal ribosomal protein uS3 family. In terms of assembly, part of the 30S ribosomal subunit.

The protein resides in the plastid. Its subcellular location is the chloroplast. The polypeptide is Small ribosomal subunit protein uS3c (rps3) (Amborella trichopoda).